Consider the following 612-residue polypeptide: uncharacterized protein (612 aa).

The interval 171 to 217 (MLPPSLVQRNNATTSPTTDSASENNESVPSLTSSVSTSSSVYSSWNP) is disordered. Polar residues predominate over residues 177 to 196 (VQRNNATTSPTTDSASENNE). Low complexity predominate over residues 197-214 (SVPSLTSSVSTSSSVYSS).

To yeast YNL018c.

This is an uncharacterized protein from Saccharomyces cerevisiae (strain ATCC 204508 / S288c) (Baker's yeast).